The primary structure comprises 142 residues: Large ribosomal subunit protein uL16 (142 aa).

The protein belongs to the universal ribosomal protein uL16 family. Part of the 50S ribosomal subunit.

Its function is as follows. Binds 23S rRNA and is also seen to make contacts with the A and possibly P site tRNAs. In Gemmatimonas aurantiaca (strain DSM 14586 / JCM 11422 / NBRC 100505 / T-27), this protein is Large ribosomal subunit protein uL16.